The sequence spans 579 residues: Glutamine--tRNA ligase (579 aa).

A 'HIGH' region motif is present at residues P41 to H51. ATP is bound by residues E42–N44 and H48–A54. Residues D74 and Y218 each contribute to the L-glutamine site. ATP contacts are provided by residues T237, R285–L286, and M293–K295. The short motif at V292–R296 is the 'KMSKS' region element.

Belongs to the class-I aminoacyl-tRNA synthetase family. As to quaternary structure, monomer.

The protein resides in the cytoplasm. It catalyses the reaction tRNA(Gln) + L-glutamine + ATP = L-glutaminyl-tRNA(Gln) + AMP + diphosphate. In Xanthomonas axonopodis pv. citri (strain 306), this protein is Glutamine--tRNA ligase.